The following is a 339-amino-acid chain: ADP-L-glycero-D-manno-heptose-6-epimerase (339 aa).

NADP(+) is bound by residues 11 to 12, 32 to 33, K39, K54, 75 to 79, and N92; these read FI, DD, and EGACS. Residue Y139 is the Proton acceptor of the active site. K143 lines the NADP(+) pocket. Position 170 (N170) interacts with substrate. NADP(+)-binding residues include V171 and K179. K179 acts as the Proton acceptor in catalysis. Residues R181, H188, 202-205, R215, and Y294 contribute to the substrate site; that span reads FGEY.

This sequence belongs to the NAD(P)-dependent epimerase/dehydratase family. HldD subfamily. As to quaternary structure, homopentamer. NADP(+) is required as a cofactor.

It catalyses the reaction ADP-D-glycero-beta-D-manno-heptose = ADP-L-glycero-beta-D-manno-heptose. It functions in the pathway nucleotide-sugar biosynthesis; ADP-L-glycero-beta-D-manno-heptose biosynthesis; ADP-L-glycero-beta-D-manno-heptose from D-glycero-beta-D-manno-heptose 7-phosphate: step 4/4. Functionally, catalyzes the interconversion between ADP-D-glycero-beta-D-manno-heptose and ADP-L-glycero-beta-D-manno-heptose via an epimerization at carbon 6 of the heptose. The protein is ADP-L-glycero-D-manno-heptose-6-epimerase of Polynucleobacter necessarius subsp. necessarius (strain STIR1).